The sequence spans 373 residues: Alpha-ketoglutarate dependent kainoid synthase (373 aa).

One can recognise a Fe2OG dioxygenase domain in the interval 204–320 (TINSKKMFFT…RSSLITFYEP (117 aa)). Positions 235, 237, and 296 each coordinate Fe cation. R311 contacts 2-oxoglutarate.

The protein belongs to the iron/ascorbate-dependent oxidoreductase family. Fe(2+) is required as a cofactor.

The enzyme catalyses N-(7'-carboxy-7'-demethylgeranyl)-L-glutamate + 2-oxoglutarate + O2 = isodomoate A + succinate + CO2 + H2O. It catalyses the reaction N-geranyl-L-glutamate + 2-oxoglutarate + O2 = dainate A + succinate + CO2 + H2O. Its pathway is secondary metabolite biosynthesis. Its function is as follows. Iron/ascorbate-dependent oxidoreductase: part of the gene cluster that mediates the biosynthesis of domoic acid (DA) and derivatives, natural products with neurochemical activity acting as ionotropic glutamate receptor (iGluR) agonists, thus being neurotoxins causing amnesic shellfish poisoning (ASP). Catalyzes the conversion of 7'-N-carboxy-L-geranyl-L-glutamic acid (cNGG) to isodomoic acid-A. Also mediates the conversion of N-geranyl-L-glutamic acid (L-NGG) to dainic acid A. This is Alpha-ketoglutarate dependent kainoid synthase from Pseudo-nitzschia multiseries (Marine planktonic diatom).